We begin with the raw amino-acid sequence, 108 residues long: Large ribosomal subunit protein bL21 (108 aa).

This sequence belongs to the bacterial ribosomal protein bL21 family. Part of the 50S ribosomal subunit. Contacts protein L20.

Functionally, this protein binds to 23S rRNA in the presence of protein L20. The chain is Large ribosomal subunit protein bL21 from Acidobacterium capsulatum (strain ATCC 51196 / DSM 11244 / BCRC 80197 / JCM 7670 / NBRC 15755 / NCIMB 13165 / 161).